Reading from the N-terminus, the 158-residue chain is Cysteine-rich venom protein VAR7 (158 aa).

The N-terminal stretch at 1 to 22 (MILLKLYLTLAAILCQSRGTTS) is a signal peptide. The SCP domain occupies 41–158 (NKHNDLRRTV…MGCAINLCPN (118 aa)). A disulfide bridge links Cys77 with Cys156.

The protein belongs to the CRISP family. Post-translationally, contains 8 disulfide bonds. As to expression, expressed by the venom gland.

Its subcellular location is the secreted. Functionally, blocks ryanodine receptors, and potassium channels. The sequence is that of Cysteine-rich venom protein VAR7 from Varanus acanthurus (Ridge-tailed monitor).